The sequence spans 231 residues: Large ribosomal subunit protein uL1 (231 aa).

It belongs to the universal ribosomal protein uL1 family. Part of the 50S ribosomal subunit.

In terms of biological role, binds directly to 23S rRNA. The L1 stalk is quite mobile in the ribosome, and is involved in E site tRNA release. Functionally, protein L1 is also a translational repressor protein, it controls the translation of the L11 operon by binding to its mRNA. The sequence is that of Large ribosomal subunit protein uL1 from Methylocella silvestris (strain DSM 15510 / CIP 108128 / LMG 27833 / NCIMB 13906 / BL2).